A 1538-amino-acid chain; its full sequence is Lhr helicase/uracil glycosylase (1538 aa).

The lhr-Core stretch occupies residues 1-897; the sequence is MADNPDPSSL…ERRASVLSLD (897 aa). Residues Gln-34, Lys-57, Thr-58, Asp-179, Glu-180, Ile-398, Arg-415, and His-418 each coordinate ATP. In terms of domain architecture, Helicase ATP-binding spans 38-235; that stretch reads WHVAARSEHA…FLGGDRPVTV (198 aa). Positions 179-182 match the DEVH box motif; it reads DEVH. Residues 284 to 462 enclose the Helicase C-terminal domain; sequence GILDEVLRHR…NLTPPHNPLD (179 aa). The interval 463–552 is beta-sheet bundle; it reads VLAQQTVAAA…VTSGGTIPDR (90 aa). The segment at 553-623 is WH domain; sequence GMYSVLLPEG…SARLPFWRGE (71 aa). Residues 624–897 are domain 4; the sequence is GNGRPAELGE…ERRASVLSLD (274 aa). Residues 898–1538 form a lhr-CTD region; it reads SELLRNLLGQ…SSSPQGLDWG (641 aa). The interval 1287–1312 is disordered; it reads SNARTSTRRSHRARRGRPVYAQPVSP. Over residues 1292–1303 the composition is skewed to basic residues; sequence STRRSHRARRGR.

This sequence belongs to the Lhr helicase family. As to quaternary structure, homooligomerizes, probably a homotetramer. Ca(2+) serves as cofactor. Uracil deglycosylase activity does not require a cofactor. is required as a cofactor.

It carries out the reaction Couples ATP hydrolysis with the unwinding of duplex DNA by translocating in the 3'-5' direction.. The enzyme catalyses ATP + H2O = ADP + phosphate + H(+). It catalyses the reaction Hydrolyzes single-stranded DNA or mismatched double-stranded DNA and polynucleotides, releasing free uracil.. Its function is as follows. A 3'-5' helicase probably involved in DNA repair. Translocates in an ATP-dependent manner 3'-to-5' on single-stranded (ss)DNA, unwinding any encountered duplex nucleic acid. An RNA:DNA hybrid with a 3'-ssDNA loading strand is a 4.5-fold better helicase substrate than 3'-tailed double-stranded (ds)DNA; substrates where the helicase loads on a 3'-ssRNA tail (DNA:RNA and RNA:RNA) are not unwound. Unlike its M.smegmatis counterpart, the ATPase is not ssDNA-dependent. Forms a clamp around the ssDNA loading strand. Excises uracil residues from DNA; forked DNA with a dU residue is the best substrate followed by ssDNA. Inactive on dsDNA with a dU residue or DNA with an 8-oxoguanine residue. Uracil residues in DNA can arise as a result of misincorporation of dUMP residues by DNA polymerase or due to deamination of cytosine. This chain is Lhr helicase/uracil glycosylase, found in Escherichia coli (strain K12).